The following is a 120-amino-acid chain: Chaperonin GroEL (120 aa).

Residue 23 to 27 coordinates ATP; that stretch reads DGTTT.

This sequence belongs to the chaperonin (HSP60) family. In terms of assembly, forms a cylinder of 14 subunits composed of two heptameric rings stacked back-to-back. Interacts with the co-chaperonin GroES.

It is found in the cytoplasm. The enzyme catalyses ATP + H2O + a folded polypeptide = ADP + phosphate + an unfolded polypeptide.. Its function is as follows. Together with its co-chaperonin GroES, plays an essential role in assisting protein folding. The GroEL-GroES system forms a nano-cage that allows encapsulation of the non-native substrate proteins and provides a physical environment optimized to promote and accelerate protein folding. The protein is Chaperonin GroEL of Mycolicibacterium rhodesiae (Mycobacterium rhodesiae).